Consider the following 262-residue polypeptide: Acyl-[acyl-carrier-protein]--UDP-N-acetylglucosamine O-acyltransferase (262 aa).

Belongs to the transferase hexapeptide repeat family. LpxA subfamily. As to quaternary structure, homotrimer.

It localises to the cytoplasm. It catalyses the reaction a (3R)-hydroxyacyl-[ACP] + UDP-N-acetyl-alpha-D-glucosamine = a UDP-3-O-[(3R)-3-hydroxyacyl]-N-acetyl-alpha-D-glucosamine + holo-[ACP]. It functions in the pathway glycolipid biosynthesis; lipid IV(A) biosynthesis; lipid IV(A) from (3R)-3-hydroxytetradecanoyl-[acyl-carrier-protein] and UDP-N-acetyl-alpha-D-glucosamine: step 1/6. In terms of biological role, involved in the biosynthesis of lipid A, a phosphorylated glycolipid that anchors the lipopolysaccharide to the outer membrane of the cell. In Paraburkholderia phytofirmans (strain DSM 17436 / LMG 22146 / PsJN) (Burkholderia phytofirmans), this protein is Acyl-[acyl-carrier-protein]--UDP-N-acetylglucosamine O-acyltransferase.